The chain runs to 443 residues: Chromosome partition protein MukF (443 aa).

The segment at 209-237 (LDETSINLRELQDTLNAAGDKLQSQLLRI) is leucine-zipper.

The protein belongs to the MukF family. In terms of assembly, interacts, and probably forms a ternary complex, with MukE and MukB via its C-terminal region. The complex formation is stimulated by calcium or magnesium. It is required for an interaction between MukE and MukB.

It is found in the cytoplasm. The protein localises to the nucleoid. Involved in chromosome condensation, segregation and cell cycle progression. May participate in facilitating chromosome segregation by condensation DNA from both sides of a centrally located replisome during cell division. Not required for mini-F plasmid partitioning. Probably acts via its interaction with MukB and MukE. Overexpression results in anucleate cells. It has a calcium binding activity. The polypeptide is Chromosome partition protein MukF (Haemophilus ducreyi (strain 35000HP / ATCC 700724)).